The following is a 232-amino-acid chain: EEF1A lysine methyltransferase 3 (232 aa).

Residues Trp-57, Gly-83–Gly-85, Asp-104, Trp-133, and Ala-150 each bind S-adenosyl-L-methionine.

This sequence belongs to the methyltransferase superfamily. METTL21 family. In terms of assembly, interacts with members of the heat shock protein 70 and 90 families and of the TCP-1 chaperonin family, as well as with HSPD1, STIP1 and tubulin; at least some of these proteins may be methylation substrates.

Its subcellular location is the cytoplasm. It localises to the cytoskeleton. It is found in the microtubule organizing center. The protein localises to the centrosome. The catalysed reaction is L-lysyl-[protein] + 3 S-adenosyl-L-methionine = N(6),N(6),N(6)-trimethyl-L-lysyl-[protein] + 3 S-adenosyl-L-homocysteine + 3 H(+). The enzyme catalyses L-lysyl-[protein] + S-adenosyl-L-methionine = N(6)-methyl-L-lysyl-[protein] + S-adenosyl-L-homocysteine + H(+). It carries out the reaction N(6)-methyl-L-lysyl-[protein] + S-adenosyl-L-methionine = N(6),N(6)-dimethyl-L-lysyl-[protein] + S-adenosyl-L-homocysteine + H(+). It catalyses the reaction N(6),N(6)-dimethyl-L-lysyl-[protein] + S-adenosyl-L-methionine = N(6),N(6),N(6)-trimethyl-L-lysyl-[protein] + S-adenosyl-L-homocysteine + H(+). Functionally, protein-lysine methyltransferase that selectively mono-, di- and trimethylates 'Lys-165' of the translation elongation factors EEF1A1 and EEF1A2 in an aminoacyl-tRNA and GTP-dependent manner. EEF1A1 methylation by EEF1AKMT3 is dynamic as well as inducible by stress conditions, such as ER-stress, and plays a regulatory role on mRNA translation. This is EEF1A lysine methyltransferase 3 from Mus musculus (Mouse).